A 96-amino-acid chain; its full sequence is UPF0235 protein VV1_1522 (96 aa).

It belongs to the UPF0235 family.

The sequence is that of UPF0235 protein VV1_1522 from Vibrio vulnificus (strain CMCP6).